The following is a 448-amino-acid chain: Probable protein phosphatase 2C 74 (448 aa).

Residues 1–48 (MGSCLSSSGGGGSRRSLHGSPHVPGPGRRKRPPKRRPGSCSSSFDNTE) form a disordered region. Residue Gly2 is the site of N-myristoyl glycine attachment. Positions 27–37 (GRRKRPPKRRP) are enriched in basic residues. In terms of domain architecture, PPM-type phosphatase spans 67 to 384 (TVSLFSQQGK…DDCAVVCLFL (318 aa)). Mn(2+)-binding residues include Asp103, Gly104, Asp329, and Asp375. The tract at residues 401–431 (HINNGVTEPEPDTASSSTPDSGTGSPELNGV) is disordered. Residues 412–426 (DTASSSTPDSGTGSP) show a composition bias toward low complexity.

The protein belongs to the PP2C family. In terms of assembly, interacts with KIN10. Requires Mg(2+) as cofactor. It depends on Mn(2+) as a cofactor. In terms of tissue distribution, expressed in the whole plant.

Its subcellular location is the cell membrane. It carries out the reaction O-phospho-L-seryl-[protein] + H2O = L-seryl-[protein] + phosphate. The catalysed reaction is O-phospho-L-threonyl-[protein] + H2O = L-threonyl-[protein] + phosphate. Acts as a protein phosphatase. The sequence is that of Probable protein phosphatase 2C 74 from Arabidopsis thaliana (Mouse-ear cress).